The primary structure comprises 317 residues: Forkhead box protein B2 (317 aa).

The fork-head DNA-binding region spans 13–107; that stretch reads KPPYSYISLT…ENGSFLRRRK (95 aa).

First expressed within the dorsolateral ectoderm, except for the organizer territory. During gastrulation, expressed in 2 ectodermal stripes adjacent to the dorsal midline. With the onset of neurulation, expression shifts first to the neural plate before settling on the bottom of the neural tube, on top of the notochord. Expression is then absent until stage 35, at which stage a pair of cells in the fourth rhombomere in the dorsolateral outer area of the rhombencephalon show expression. This is followed shortly afterwards by expression in a pair of cells in rhombomere 6 at the ventricular side of the rhombencephalon.

Its subcellular location is the nucleus. Transcription factor. The protein is Forkhead box protein B2 of Xenopus laevis (African clawed frog).